Here is a 118-residue protein sequence, read N- to C-terminus: Transcription factor PAR1 (118 aa).

Residues 1–58 form a disordered region; the sequence is MEETLATPDATRRSLSPSCSATVKSRAAGFERRTKRRLSETNASVREDREEAEEEEDE. The span at 13–23 shows a compositional bias: polar residues; the sequence is RSLSPSCSATV. The region spanning 43 to 92 is the bHLH domain; that stretch reads ASVREDREEAEEEEDEVKEKIEALQRIIPGGAALGVDALFEETAGYILSL.

Belongs to the bHLH protein family. As to quaternary structure, homodimer.

It localises to the nucleus. Functionally, atypical bHLH transcription factor that acts as a negative regulator of a variety of shade avoidance syndrome (SAS) responses, including seedling elongation and photosynthetic pigment accumulation. Acts as a direct transcriptional repressor of two auxin-responsive genes, SAUR15 and SAUR68. May function in integrating shade and hormone transcriptional networks in response to light and auxin changes. In Arabidopsis thaliana (Mouse-ear cress), this protein is Transcription factor PAR1 (PAR1).